The chain runs to 65 residues: Small ribosomal subunit protein bS21A (65 aa).

The protein belongs to the bacterial ribosomal protein bS21 family.

This chain is Small ribosomal subunit protein bS21A, found in Francisella tularensis subsp. holarctica (strain LVS).